Reading from the N-terminus, the 934-residue chain is Protocadherin gamma-C3 (934 aa).

A signal peptide spans 1–31 (MVPEAWRSGLVSTGRVVGVLLLLGALNKAST). Cadherin domains lie at 32–135 (VIHY…NPAF), 136–244 (PTQE…APVF), 245–352 (NQSL…APEI), 353–457 (TVTS…PPQS), 458–567 (SQSS…APQV), and 572–685 (PGGS…APRE). Residues 32-693 (VIHYEIPEER…REQKKNLTFY (662 aa)) are Extracellular-facing. Asparagine 245, asparagine 424, asparagine 478, asparagine 550, asparagine 615, and asparagine 689 each carry an N-linked (GlcNAc...) asparagine glycan. Residues 694–714 (LLLSLILVSVGFVVTVFGVII) traverse the membrane as a helical segment. The Cytoplasmic portion of the chain corresponds to 715 to 934 (FKVYKWKQSR…KKKSGKKEKK (220 aa)). Disordered regions lie at residues 804-843 (ESAPPGQQAPPNTDWRFSQAQRPGTSGSQNGDDTGTWPNN) and 904-934 (ATLTNAAGKRDGKAPAGGNGNKKKSGKKEKK). Polar residues predominate over residues 812 to 843 (APPNTDWRFSQAQRPGTSGSQNGDDTGTWPNN). Basic residues predominate over residues 924-934 (NKKKSGKKEKK).

Its subcellular location is the cell membrane. Functionally, potential calcium-dependent cell-adhesion protein. May be involved in the establishment and maintenance of specific neuronal connections in the brain. The sequence is that of Protocadherin gamma-C3 (PCDHGC3) from Homo sapiens (Human).